A 120-amino-acid chain; its full sequence is uncharacterized protein (120 aa).

It is found in the virion. This is an uncharacterized protein from Acanthamoeba polyphaga mimivirus (APMV).